The sequence spans 160 residues: Ureidoglycolate lyase (160 aa).

This sequence belongs to the ureidoglycolate lyase family. As to quaternary structure, homodimer. Ni(2+) serves as cofactor.

The enzyme catalyses (S)-ureidoglycolate = urea + glyoxylate. It participates in nitrogen metabolism; (S)-allantoin degradation. In terms of biological role, catalyzes the catabolism of the allantoin degradation intermediate (S)-ureidoglycolate, generating urea and glyoxylate. Involved in the anaerobic utilization of allantoin as sole nitrogen source. Reinforces the induction of genes involved in the degradation of allantoin and glyoxylate by producing glyoxylate. The polypeptide is Ureidoglycolate lyase (Escherichia coli (strain SMS-3-5 / SECEC)).